We begin with the raw amino-acid sequence, 436 residues long: Adenylosuccinate synthetase (436 aa).

GTP is bound by residues 12–18 (GDEGKGK) and 40–42 (GHT). Asp-13 functions as the Proton acceptor in the catalytic mechanism. Residues Asp-13 and Gly-40 each coordinate Mg(2+). IMP contacts are provided by residues 13–16 (DEGK), 38–41 (NAGH), Thr-128, Arg-142, Gln-223, Thr-238, and Arg-302. Catalysis depends on His-41, which acts as the Proton donor. Substrate is bound at residue 298–304 (TTTGRRR). Residues Arg-304, 330-332 (KLD), and 412-414 (SLG) each bind GTP.

The protein belongs to the adenylosuccinate synthetase family. In terms of assembly, homodimer. Mg(2+) serves as cofactor.

The protein resides in the cytoplasm. The enzyme catalyses IMP + L-aspartate + GTP = N(6)-(1,2-dicarboxyethyl)-AMP + GDP + phosphate + 2 H(+). It functions in the pathway purine metabolism; AMP biosynthesis via de novo pathway; AMP from IMP: step 1/2. Plays an important role in the de novo pathway of purine nucleotide biosynthesis. Catalyzes the first committed step in the biosynthesis of AMP from IMP. This Prochlorococcus marinus (strain MIT 9301) protein is Adenylosuccinate synthetase.